The primary structure comprises 142 residues: Autophagy-related protein 31 (142 aa).

It is found in the cytoplasm. The protein resides in the cytoskeleton. It localises to the preautophagosomal structure. Plays a role in starvation-induced autophagy. Involved in mitophagy. Functions with ATG17 and ATG29 at the preautophagosomal structure (PAS) in order to form normal autophagosomes under starvation conditions. May be involved in microtubule function, such as chromosome segregation and karyogamy. This Eremothecium gossypii (strain ATCC 10895 / CBS 109.51 / FGSC 9923 / NRRL Y-1056) (Yeast) protein is Autophagy-related protein 31 (CIS1).